Here is a 777-residue protein sequence, read N- to C-terminus: Isoamylase (777 aa).

The signal sequence occupies residues 1-32 (MDPHAPQRQRSGQRLRALALAALACALSPAHA). Positions 162, 263, 264, 266, and 293 each coordinate Ca(2+). Asp410 acts as the Nucleophile in catalysis. Cysteines 419 and 423 form a disulfide. The Proton donor role is filled by Glu458.

The protein belongs to the glycosyl hydrolase 13 family. Monomer. Ca(2+) is required as a cofactor.

The catalysed reaction is Hydrolysis of (1-&gt;6)-alpha-D-glucosidic branch linkages in glycogen, amylopectin and their beta-limit dextrins.. Functionally, has a high rate of hydrolysis for glycogen. Does not cleave pullulan. The polypeptide is Isoamylase (iam) (Flavobacterium sp).